Reading from the N-terminus, the 245-residue chain is Precorrin-2 C(20)-methyltransferase (245 aa).

This sequence belongs to the precorrin methyltransferase family. Homodimer.

It carries out the reaction precorrin-2 + S-adenosyl-L-methionine = precorrin-3A + S-adenosyl-L-homocysteine + H(+). It participates in cofactor biosynthesis; adenosylcobalamin biosynthesis; cob(II)yrinate a,c-diamide from precorrin-2 (aerobic route): step 1/10. Functionally, methylates precorrin-2 at the C-20 position to produce precorrin-3A. In Sinorhizobium sp, this protein is Precorrin-2 C(20)-methyltransferase (cobI).